The following is a 520-amino-acid chain: Probable glycine dehydrogenase (decarboxylating) subunit 2 (520 aa).

Positions 1 to 29 (MWRQSRWNEPLITEMSRRGRRGALPPRPD) are disordered. Lys279 carries the post-translational modification N6-(pyridoxal phosphate)lysine.

It belongs to the GcvP family. C-terminal subunit subfamily. The glycine cleavage system is composed of four proteins: P, T, L and H. In this organism, the P 'protein' is a heterodimer of two subunits. Pyridoxal 5'-phosphate serves as cofactor.

It carries out the reaction N(6)-[(R)-lipoyl]-L-lysyl-[glycine-cleavage complex H protein] + glycine + H(+) = N(6)-[(R)-S(8)-aminomethyldihydrolipoyl]-L-lysyl-[glycine-cleavage complex H protein] + CO2. Functionally, the glycine cleavage system catalyzes the degradation of glycine. The P protein binds the alpha-amino group of glycine through its pyridoxal phosphate cofactor; CO(2) is released and the remaining methylamine moiety is then transferred to the lipoamide cofactor of the H protein. The sequence is that of Probable glycine dehydrogenase (decarboxylating) subunit 2 from Aeropyrum pernix (strain ATCC 700893 / DSM 11879 / JCM 9820 / NBRC 100138 / K1).